A 196-amino-acid polypeptide reads, in one-letter code: Neuropeptide prohormone-4 (196 aa).

The first 25 residues, 1-25 (MSSPLRMDVTFLLAAIAVTWVCGLK), serve as a signal peptide directing secretion. Positions 50–90 (DCDIASPFKCEESPTCLRLFQVCNGRWDCEHGSDEDNALCA) constitute an LDL-receptor class A domain. 3 disulfide bridges follow: Cys51–Cys65, Cys59–Cys78, and Cys72–Cys89.

As to expression, expressed by the venom duct.

The protein localises to the secreted. The polypeptide is Neuropeptide prohormone-4 (Conus victoriae (Queen Victoria cone)).